The primary structure comprises 428 residues: Cholesterol 7-desaturase (428 aa).

Residues 6–26 (IWGFLTAHPISVVTTILIVYL) traverse the membrane as a helical segment. The 107-residue stretch at 81-187 (WYCVCESEKL…CIERNNNIYL (107 aa)) folds into the Rieske domain. 4 residues coordinate [2Fe-2S] cluster: cysteine 122, histidine 124, cysteine 143, and histidine 146.

This sequence belongs to the cholesterol 7-desaturase family. [2Fe-2S] cluster serves as cofactor. In terms of tissue distribution, expressed in intestine at all postembryonic stages, including dauer. Expression is reduced in daf-2 mutants.

The protein resides in the membrane. The catalysed reaction is cholesterol + NADPH + O2 + H(+) = 7-dehydrocholesterol + NADP(+) + 2 H2O. The enzyme catalyses cholesterol + NADH + O2 + H(+) = 7-dehydrocholesterol + NAD(+) + 2 H2O. It functions in the pathway steroid hormone biosynthesis; dafachronic acid biosynthesis. Functionally, catalyzes the production of 7-dehydrocholesterol (7-DHC or cholesta-5,7-dien-3beta-ol) by inserting a double bond (desaturating) at the C7-C8 single bond of cholesterol. This reaction is the first step in the synthesis of the steroid hormone Delta(7)-dafachronic acid (one of the principal steroid hormones in nematodes). Dafachronic acids bind directly to the nuclear hormone receptor (NHR) daf-12, suppressing dauer formation and inducing reproductive growth. This Caenorhabditis elegans protein is Cholesterol 7-desaturase (daf-36).